The chain runs to 206 residues: MGQKVNPIGFRLKINNNTWDSVWYANKDYKEKLHQDLFIRSYINESFKHAGLSKIIIERKVDLLSVTIHSSRPGVIIGKKGLDIEKVKQKIAEKVKNSVEVNVVGIKRPEIDAALISSSIAQQLEKRVSFRRAMKKAIQSCLRMGGGGIKVGCSGRLGGAEIARTEWYKEGRLPLHTLRANIDYAFCEAKTIYGIIGVKVWVYIVN.

Positions 39–107 constitute a KH type-2 domain; it reads IRSYINESFK…SVEVNVVGIK (69 aa).

It belongs to the universal ribosomal protein uS3 family. As to quaternary structure, part of the 30S ribosomal subunit. Forms a tight complex with proteins S10 and S14.

Functionally, binds the lower part of the 30S subunit head. Binds mRNA in the 70S ribosome, positioning it for translation. This Wolbachia sp. subsp. Brugia malayi (strain TRS) protein is Small ribosomal subunit protein uS3.